The following is a 5142-amino-acid chain: Protein piccolo (5142 aa).

The span at M1–A21 shows a compositional bias: low complexity. 2 disordered regions span residues M1 to P154 and D177 to G583. Basic and acidic residues-rich tracts occupy residues R114–L125, K136–S150, and E188–K202. Residues Q232 to P244 show a composition bias toward polar residues. Composition is skewed to pro residues over residues L298 to Q317 and P352 to P371. Residues T376 to Q385 show a composition bias toward polar residues. The interval V397 to T555 is 10 X 10 AA tandem approximate repeats of P-A-K-P-Q-P-Q-Q-P-X. A compositionally biased stretch (pro residues) spans T467–Q493. Low complexity predominate over residues P494–S506. Positions T507–Q522 are enriched in pro residues. Positions Q523–S554 are enriched in low complexity. Residues C589–C613 form a C4-type zinc finger. Disordered regions lie at residues L650–G929 and L945–T1058. Residues S673–S683 are compositionally biased toward low complexity. 2 stretches are compositionally biased toward basic and acidic residues: residues P684–K702 and E743–K755. Residues D765 to T774 are compositionally biased toward polar residues. The span at K841–K857 shows a compositional bias: basic and acidic residues. A compositionally biased stretch (pro residues) spans K873–R882. The span at V889–V927 shows a compositional bias: polar residues. Phosphoserine is present on residues S906 and S918. Phosphothreonine is present on T922. Low complexity predominate over residues A949–A969. Basic and acidic residues-rich tracts occupy residues V996–A1012 and K1019–K1034. The C4-type zinc finger occupies C1059–C1082. Disordered regions lie at residues G1120–E1163, E1183–K1386, G1391–A1410, and Q1423–E1868. The span at P1126–V1139 shows a compositional bias: pro residues. Basic and acidic residues-rich tracts occupy residues Q1193–L1265, P1307–K1318, and D1330–D1347. The segment covering T1348–Q1358 has biased composition (low complexity). A phosphoserine mark is found at S1356, S1366, S1367, S1396, S1398, S1401, S1402, and S1405. Residues G1359–L1374 show a composition bias toward polar residues. Over residues S1398–S1407 the composition is skewed to low complexity. 2 stretches are compositionally biased toward basic and acidic residues: residues A1428–K1451 and K1469–Y1510. Phosphoserine occurs at positions 1516, 1517, 1519, 1522, 1546, 1549, 1570, and 1572. Acidic residues predominate over residues S1564–E1576. T1617 bears the Phosphothreonine mark. Residues S1618, S1628, and S1640 each carry the phosphoserine modification. Acidic residues predominate over residues D1631–S1640. A compositionally biased stretch (basic and acidic residues) spans P1641–E1652. Residues E1671–T1689 show a composition bias toward polar residues. Residues F1693–S1703 show a composition bias toward acidic residues. S1703 is subject to Phosphoserine. T1705 carries the phosphothreonine modification. A phosphoserine mark is found at S1707 and S1712. Positions E1715–T1732 are enriched in polar residues. The span at D1772–L1785 shows a compositional bias: acidic residues. 2 positions are modified to phosphoserine: S1773 and S1774. Positions L1786–Q1799 are enriched in basic and acidic residues. The residue at position 1825 (T1825) is a Phosphothreonine. A Phosphoserine modification is found at S1831. The segment covering E1840–S1855 has biased composition (basic and acidic residues). Phosphoserine occurs at positions 1860, 1865, 1873, and 1894. Disordered stretches follow at residues P2169–C2192, E2365–L2438, and E2504–L2536. 2 stretches are compositionally biased toward low complexity: residues T2174–C2192 and S2374–P2387. 2 stretches are compositionally biased toward pro residues: residues Q2404–P2433 and S2506–P2517. S2562 carries the phosphoserine modification. Phosphothreonine is present on T3069. Disordered regions lie at residues E3407 to K3508 and K3558 to P3626. Residues D3432 to V3441 show a composition bias toward basic and acidic residues. S3443 is modified (phosphoserine). Phosphothreonine occurs at positions 3447 and 3474. Residues T3474–D3483 show a composition bias toward acidic residues. The segment covering D3574–S3585 has biased composition (polar residues). A phosphoserine mark is found at S3577, S3585, S3615, S3619, S3625, S3628, S3631, S3652, S3678, S3680, and S3686. Disordered regions lie at residues S3652–V3746 and Y3833–H3908. Polar residues-rich tracts occupy residues E3701 to A3716 and S3733 to T3745. The residue at position 3835 (S3835) is a Phosphoserine. Residues T3845–R3857 show a composition bias toward basic and acidic residues. Polar residues predominate over residues A3859 to H3908. S4088 and S4204 each carry phosphoserine. Residues E4278 to L4301 form a disordered region. Positions P4282 to L4301 are enriched in low complexity. 5 positions are modified to phosphoserine: S4358, S4362, S4365, S4394, and S4430. A disordered region spans residues R4389–T4411. The region spanning R4496 to L4590 is the PDZ domain. Disordered regions lie at residues E4597 to G4618 and E4645 to V4690. Positions N4598–K4615 are enriched in basic and acidic residues. The span at S4652–V4673 shows a compositional bias: low complexity. S4664 is subject to Phosphoserine. A C2 1 domain is found at I4694–Y4823. Positions 4723 and 4729 each coordinate Ca(2+). Residue S4778 is modified to Phosphoserine. Ca(2+) contacts are provided by D4793, D4795, S4798, and D4801. Disordered regions lie at residues E4830–T4907 and P4930–Q4986. Composition is skewed to low complexity over residues H4838–K4853 and S4877–E4887. Polar residues predominate over residues P4895–T4907. Positions S4941 to S4965 are enriched in low complexity. A C2 2 domain is found at V5007–H5132.

As to quaternary structure, interacts with BSN, ERC2/CAST1, RIMS1 and UNC13A. Interacts (via C-terminus) with TRIO (via N-terminus). Interacts with CTBP1. Interacts with SIAH1; this interaction negatively regulates SIAH1 E3 ligase activity. Directly interacts with GIT1 and GIT2. It depends on Ca(2+) as a cofactor. As to expression, moderately expressed in the developing cerebral cortex.

It is found in the presynaptic active zone. Functionally, scaffold protein of the presynaptic cytomatrix at the active zone (CAZ) which is the place in the synapse where neurotransmitter is released. After synthesis, participates in the formation of Golgi-derived membranous organelles termed Piccolo-Bassoon transport vesicles (PTVs) that are transported along axons to sites of nascent synaptic contacts. At the presynaptic active zone, regulates the spatial organization of synaptic vesicle cluster, the protein complexes that execute membrane fusion and compensatory endocytosis. Organizes as well the readily releasable pool of synaptic vesicles and safeguards a fraction of them to be not immediately available for action potential-induced release. Also functions in processes other than assembly such as the regulation of specific presynaptic protein ubiquitination by interacting with SIAH1 or the regulation of presynaptic autophagy. Also mediates synapse to nucleus communication leading to reconfiguration of gene expression by associating with the transcriptional corepressor CTBP1 and by subsequently reducing the size of its pool available for nuclear import. The protein is Protein piccolo of Homo sapiens (Human).